The following is a 673-amino-acid chain: Annexin A6 (673 aa).

An N-acetylalanine modification is found at A2. The residue at position 13 (S13) is a Phosphoserine. 8 Annexin repeats span residues 20-91 (FDAN…NLMR), 92-163 (PLAY…VLLQ), 175-247 (DLVQ…AVVK), 251-322 (STPE…KLCG), 363-434 (FNPD…GLMM), 435-506 (PPAH…SLAT), 521-595 (EDAQ…AIVQ), and 599-670 (NKPL…ALCG). Y30 carries the phosphotyrosine modification. An N6-acetyllysine mark is found at K63, K68, K75, and K81. Y201 carries the phosphotyrosine modification. N6-acetyllysine is present on residues K306, K370, and K418. S422 is subject to Phosphoserine. Residue K483 is modified to N6-acetyllysine. S537 is modified (phosphoserine). K620 carries the N6-acetyllysine modification.

This sequence belongs to the annexin family.

The protein localises to the cytoplasm. The protein resides in the melanosome. Its function is as follows. May associate with CD21. May regulate the release of Ca(2+) from intracellular stores. This Mus musculus (Mouse) protein is Annexin A6 (Anxa6).